The sequence spans 160 residues: 2-C-methyl-D-erythritol 2,4-cyclodiphosphate synthase (160 aa).

A divalent metal cation contacts are provided by D9 and H11. 4-CDP-2-C-methyl-D-erythritol 2-phosphate contacts are provided by residues 9-11 and 35-36; these read DVH and HS. Residue H43 coordinates a divalent metal cation. 4-CDP-2-C-methyl-D-erythritol 2-phosphate is bound by residues 57-59, 62-66, 133-136, F140, and R143; these read DIG, FPDTD, and TTTE.

Belongs to the IspF family. As to quaternary structure, homotrimer. Requires a divalent metal cation as cofactor.

It carries out the reaction 4-CDP-2-C-methyl-D-erythritol 2-phosphate = 2-C-methyl-D-erythritol 2,4-cyclic diphosphate + CMP. It participates in isoprenoid biosynthesis; isopentenyl diphosphate biosynthesis via DXP pathway; isopentenyl diphosphate from 1-deoxy-D-xylulose 5-phosphate: step 4/6. In terms of biological role, involved in the biosynthesis of isopentenyl diphosphate (IPP) and dimethylallyl diphosphate (DMAPP), two major building blocks of isoprenoid compounds. Catalyzes the conversion of 4-diphosphocytidyl-2-C-methyl-D-erythritol 2-phosphate (CDP-ME2P) to 2-C-methyl-D-erythritol 2,4-cyclodiphosphate (ME-CPP) with a corresponding release of cytidine 5-monophosphate (CMP). The sequence is that of 2-C-methyl-D-erythritol 2,4-cyclodiphosphate synthase from Haemophilus ducreyi (strain 35000HP / ATCC 700724).